Consider the following 539-residue polypeptide: Ell-associated factor Eaf (539 aa).

The tract at residues 119–539 (TRSEMTHHKP…SSNSSDDDDD (421 aa)) is disordered. Residues 132–146 (PATNINHNNIPMSTN) are compositionally biased toward polar residues. Pro residues predominate over residues 151-163 (GPGPGPGSGPSPP). The segment covering 174 to 195 (KLENSTMRISSKTKVSTGSRRN) has biased composition (polar residues). Residue serine 205 is modified to Phosphoserine. Residues 220–238 (RSPQSAPAWNANNAQQTLP) show a composition bias toward polar residues. Composition is skewed to low complexity over residues 267–278 (SGSSTGSSTGQP), 309–337 (MHQN…YGRG), and 345–375 (NNYA…SHHS). Positions 420-435 (DSSDSDSGSESDDSTD) are enriched in acidic residues. 2 stretches are compositionally biased toward low complexity: residues 461–493 (HQQL…QPQQ) and 520–533 (NDLL…SSNS).

The protein belongs to the EAF family.

The protein localises to the nucleus. In terms of biological role, promotes transcriptional elongation by Su(Tpl)/ELL. Essential for development. The sequence is that of Ell-associated factor Eaf from Drosophila willistoni (Fruit fly).